The following is a 465-amino-acid chain: Pre-mRNA-splicing factor URN1 (465 aa).

One can recognise a WW domain in the interval 1–32 (MRGEWQEFKTPAGKKYYYNKNTKQSRWEKPNL). 3 disordered regions span residues 28–49 (EKPNLKKGSNLESNAKESQTER), 144–198 (ERKD…VNQD), and 266–288 (ERSGNATAEESDSEDNSEDDSEV). At S150 the chain carries Phosphoserine. Residues 160-175 (LQESHTGLVSGYGSSS) show a composition bias toward polar residues. Positions 176-192 (GEEDEEEDEEEDEENEE) are enriched in acidic residues. One can recognise an FF domain in the interval 212–266 (DIDERNIFFELFDRYKLDKFSTWSLQSKKIENDPDFYKIRDDTVRESLFEEWCGE). The segment covering 274–288 (EESDSEDNSEDDSEV) has biased composition (acidic residues).

Component of the precatalytic spliceosomal complex B. Interacts with PRP19.

It localises to the nucleus. Functionally, component of the spliceosome involved in mRNA processing. This Saccharomyces cerevisiae (strain ATCC 204508 / S288c) (Baker's yeast) protein is Pre-mRNA-splicing factor URN1 (URN1).